Here is a 363-residue protein sequence, read N- to C-terminus: 3-isopropylmalate dehydrogenase (363 aa).

NAD(+) is bound at residue 78 to 91 (GPKWENLPPESQPE). Residues arginine 99, arginine 109, arginine 138, and aspartate 227 each contribute to the substrate site. Residues aspartate 227, aspartate 251, and aspartate 255 each coordinate Mg(2+). Residue 285–297 (GSAPDIAGKNIAN) coordinates NAD(+).

It belongs to the isocitrate and isopropylmalate dehydrogenases family. LeuB type 1 subfamily. In terms of assembly, homodimer. Mg(2+) serves as cofactor. The cofactor is Mn(2+).

The protein localises to the cytoplasm. The enzyme catalyses (2R,3S)-3-isopropylmalate + NAD(+) = 4-methyl-2-oxopentanoate + CO2 + NADH. It participates in amino-acid biosynthesis; L-leucine biosynthesis; L-leucine from 3-methyl-2-oxobutanoate: step 3/4. Catalyzes the oxidation of 3-carboxy-2-hydroxy-4-methylpentanoate (3-isopropylmalate) to 3-carboxy-4-methyl-2-oxopentanoate. The product decarboxylates to 4-methyl-2 oxopentanoate. The chain is 3-isopropylmalate dehydrogenase from Salmonella typhi.